Here is a 175-residue protein sequence, read N- to C-terminus: Cyclic pyranopterin monophosphate synthase (175 aa).

Residues 78-80 (LCH) and 125-126 (ME) each bind substrate. Asp-140 is a catalytic residue.

It belongs to the MoaC family. Homohexamer; trimer of dimers.

The catalysed reaction is (8S)-3',8-cyclo-7,8-dihydroguanosine 5'-triphosphate = cyclic pyranopterin phosphate + diphosphate. Its pathway is cofactor biosynthesis; molybdopterin biosynthesis. Catalyzes the conversion of (8S)-3',8-cyclo-7,8-dihydroguanosine 5'-triphosphate to cyclic pyranopterin monophosphate (cPMP). The chain is Cyclic pyranopterin monophosphate synthase from Rhodopirellula baltica (strain DSM 10527 / NCIMB 13988 / SH1).